Consider the following 626-residue polypeptide: Colicin-Ia (626 aa).

Residues 23–225 (EIMAVDIYVN…TRLSELEKNG (203 aa)) are translocation (T). The segment covering 276–286 (QQLTQQKNTPD) has biased composition (polar residues). The interval 276-308 (QQLTQQKNTPDGKTIVSPEKFPGRSSTNHSIVV) is disordered. Residues 282-385 (KNTPDGKTIV…LRQRLLDARN (104 aa)) are receptor-binding (R). The interval 450-626 (KDAINFTTEF…VEKANKFWGI (177 aa)) is channel (C). 2 helical membrane-spanning segments follow: residues 580 to 594 (ATAL…LTGS) and 597 to 612 (GIIG…GALI).

The protein belongs to the channel forming colicin family.

It is found in the cell membrane. In terms of biological role, this colicin is a channel-forming colicin. This class of transmembrane toxins depolarize the cytoplasmic membrane, leading to dissipation of cellular energy. Functionally, colicins are polypeptide toxins produced by and active against E.coli and closely related bacteria. This Escherichia coli protein is Colicin-Ia (cia).